Here is a 21-residue protein sequence, read N- to C-terminus: Granule-bound starch synthase 1 (21 aa).

Belongs to the glycosyltransferase 1 family. Bacterial/plant glycogen synthase subfamily.

The protein resides in the plastid. The protein localises to the chloroplast. It is found in the amyloplast. The enzyme catalyses an NDP-alpha-D-glucose + [(1-&gt;4)-alpha-D-glucosyl](n) = [(1-&gt;4)-alpha-D-glucosyl](n+1) + a ribonucleoside 5'-diphosphate + H(+). Its pathway is glycan biosynthesis; starch biosynthesis. This chain is Granule-bound starch synthase 1, found in Secale cereale (Rye).